The primary structure comprises 502 residues: Glycerol kinase (502 aa).

Threonine 14 provides a ligand contact to ADP. ATP is bound by residues threonine 14, threonine 15, and serine 16. Threonine 14 serves as a coordination point for sn-glycerol 3-phosphate. Arginine 18 contacts ADP. Sn-glycerol 3-phosphate is bound by residues arginine 84, glutamate 85, tyrosine 136, and aspartate 246. Glycerol contacts are provided by arginine 84, glutamate 85, tyrosine 136, aspartate 246, and glutamine 247. ADP contacts are provided by threonine 268 and glycine 311. Threonine 268, glycine 311, glutamine 315, and glycine 412 together coordinate ATP. The ADP site is built by glycine 412 and asparagine 416.

This sequence belongs to the FGGY kinase family. As to quaternary structure, homotetramer and homodimer (in equilibrium). Heterodimer with EIIA-Glc. Binds 1 zinc ion per glycerol kinase EIIA-Glc dimer. The zinc ion is important for dimerization.

The enzyme catalyses glycerol + ATP = sn-glycerol 3-phosphate + ADP + H(+). It functions in the pathway polyol metabolism; glycerol degradation via glycerol kinase pathway; sn-glycerol 3-phosphate from glycerol: step 1/1. With respect to regulation, activity of this regulatory enzyme is affected by several metabolites. Allosterically and non-competitively inhibited by fructose 1,6-bisphosphate (FBP) and unphosphorylated phosphocarrier protein EIIA-Glc (III-Glc), an integral component of the bacterial phosphotransferase (PTS) system. Functionally, key enzyme in the regulation of glycerol uptake and metabolism. Catalyzes the phosphorylation of glycerol to yield sn-glycerol 3-phosphate. This is Glycerol kinase from Shigella boydii serotype 18 (strain CDC 3083-94 / BS512).